The chain runs to 448 residues: Phosphoglucosamine mutase (448 aa).

Serine 102 serves as the catalytic Phosphoserine intermediate. Positions 102, 241, 243, and 245 each coordinate Mg(2+). Serine 102 is subject to Phosphoserine.

It belongs to the phosphohexose mutase family. Mg(2+) serves as cofactor. In terms of processing, activated by phosphorylation.

The catalysed reaction is alpha-D-glucosamine 1-phosphate = D-glucosamine 6-phosphate. Functionally, catalyzes the conversion of glucosamine-6-phosphate to glucosamine-1-phosphate. In Ruegeria pomeroyi (strain ATCC 700808 / DSM 15171 / DSS-3) (Silicibacter pomeroyi), this protein is Phosphoglucosamine mutase.